Reading from the N-terminus, the 715-residue chain is Polyribonucleotide nucleotidyltransferase (715 aa).

Mg(2+) is bound by residues Asp-485 and Asp-491. In terms of domain architecture, KH spans Pro-552–Ile-611. One can recognise an S1 motif domain in the interval Asn-621–Lys-689. Positions Thr-695–Ile-715 are disordered.

This sequence belongs to the polyribonucleotide nucleotidyltransferase family. In terms of assembly, component of the RNA degradosome, which is a multiprotein complex involved in RNA processing and mRNA degradation. Mg(2+) serves as cofactor.

It localises to the cytoplasm. It carries out the reaction RNA(n+1) + phosphate = RNA(n) + a ribonucleoside 5'-diphosphate. In terms of biological role, involved in mRNA degradation. Catalyzes the phosphorolysis of single-stranded polyribonucleotides processively in the 3'- to 5'-direction. In Actinobacillus pleuropneumoniae serotype 3 (strain JL03), this protein is Polyribonucleotide nucleotidyltransferase.